A 96-amino-acid chain; its full sequence is Integration host factor subunit beta (96 aa).

It belongs to the bacterial histone-like protein family. In terms of assembly, heterodimer of an alpha and a beta chain.

In terms of biological role, this protein is one of the two subunits of integration host factor, a specific DNA-binding protein that functions in genetic recombination as well as in transcriptional and translational control. In Dichelobacter nodosus (strain VCS1703A), this protein is Integration host factor subunit beta.